Consider the following 1187-residue polypeptide: Intraflagellar transport protein 122 homolog (1187 aa).

WD repeat units follow at residues 16 to 54 (KVEQ…LIQP), 57 to 97 (GHKD…LKYT), 99 to 135 (NDSI…VSKH), 137 to 175 (VSSK…KVKI), 180 to 223 (GSSS…IGKD), 225 to 264 (SLTF…LGSI), 266 to 306 (EQNA…HGLY), and 459 to 498 (KQNT…LLFQ). Positions 1070-1094 (KSWQEMSSGESQCLKLEDGPDDPED) are disordered.

Component of the IFT complex A (IFT-A) complex.

The protein resides in the cell projection. The protein localises to the cilium. It localises to the cytoplasm. Its subcellular location is the cytoskeleton. It is found in the cilium basal body. Its function is as follows. Required for cilia formation during embryonal development. Acts as a negative regulator of Shh signaling. The protein is Intraflagellar transport protein 122 homolog (ift122) of Danio rerio (Zebrafish).